The chain runs to 64 residues: Large ribosomal subunit protein bL35 (64 aa).

The segment covering 1–44 (MSKIKSHSGAAKRFKRTANGFKHKQSHTSHILTKKSTKRKRHLR) has biased composition (basic residues). The interval 1–48 (MSKIKSHSGAAKRFKRTANGFKHKQSHTSHILTKKSTKRKRHLRSMNQ) is disordered.

Belongs to the bacterial ribosomal protein bL35 family.

This Marinomonas sp. (strain MWYL1) protein is Large ribosomal subunit protein bL35.